Reading from the N-terminus, the 225-residue chain is Histone H3-like centromeric protein cid (225 aa).

Positions 1–11 (MPRHSRAKRAP) are enriched in basic residues. Residues 1 to 131 (MPRHSRAKRA…KAANPMSRAK (131 aa)) form a disordered region. Over residues 43 to 52 (FTTSQLTLQD) the composition is skewed to polar residues. Residues Ser74 and Ser75 each carry the phosphoserine modification. Position 76 is a phosphothreonine (Thr76). At Ser77 the chain carries Phosphoserine. The segment covering 86–103 (RYPTTRSPQTRRMTVQQE) has biased composition (polar residues). An H3-like region spans residues 133-225 (MDREIRRLQH…AYICDRGRQF (93 aa)).

This sequence belongs to the histone H3 family. As to quaternary structure, forms a nucleosome-like histone octamer containing two molecules each of H2A, H2B, cid and H4 assembled in one cid-H4 heterotetramer and two H2A-H2B heterodimers. The cid-H4 heterotetramer is more compact and structurally more rigid than corresponding H3-H4 heterotetramers. Interacts with the condensin subunit Cap-G. Interacts with Chrac-14.

It is found in the nucleus. The protein resides in the chromosome. It localises to the centromere. Its subcellular location is the kinetochore. Histone H3-like variant which exclusively replaces conventional H3 in the nucleosome core of centromeric chromatin at the inner plate of the kinetochore. Required for recruitment and assembly of kinetochore proteins, mitotic progression and chromosome segregation. May serve as an epigenetic mark that propagates centromere identity through replication and cell division. The chain is Histone H3-like centromeric protein cid from Drosophila melanogaster (Fruit fly).